A 365-amino-acid polypeptide reads, in one-letter code: Chorismate synthase (365 aa).

Arginine 46 provides a ligand contact to NADP(+). FMN-binding positions include 123-125, 241-242, glycine 281, 296-300, and arginine 322; these read RSS, NG, and KPTPS.

Belongs to the chorismate synthase family. As to quaternary structure, homotetramer. FMNH2 serves as cofactor.

It carries out the reaction 5-O-(1-carboxyvinyl)-3-phosphoshikimate = chorismate + phosphate. It functions in the pathway metabolic intermediate biosynthesis; chorismate biosynthesis; chorismate from D-erythrose 4-phosphate and phosphoenolpyruvate: step 7/7. Functionally, catalyzes the anti-1,4-elimination of the C-3 phosphate and the C-6 proR hydrogen from 5-enolpyruvylshikimate-3-phosphate (EPSP) to yield chorismate, which is the branch point compound that serves as the starting substrate for the three terminal pathways of aromatic amino acid biosynthesis. This reaction introduces a second double bond into the aromatic ring system. This chain is Chorismate synthase, found in Helicobacter pylori (strain ATCC 700392 / 26695) (Campylobacter pylori).